The primary structure comprises 598 residues: UvrABC system protein C (598 aa).

One can recognise a GIY-YIG domain in the interval 14-91 (DSPGCYLHKD…IQKNMPKYNI (78 aa)). The 36-residue stretch at 196–231 (DKIIEDLRSKMLAASEEMAFERAAEYRDLISGIATM) folds into the UVR domain.

The protein belongs to the UvrC family. In terms of assembly, interacts with UvrB in an incision complex.

It localises to the cytoplasm. Functionally, the UvrABC repair system catalyzes the recognition and processing of DNA lesions. UvrC both incises the 5' and 3' sides of the lesion. The N-terminal half is responsible for the 3' incision and the C-terminal half is responsible for the 5' incision. The protein is UvrABC system protein C of Streptococcus pyogenes serotype M12 (strain MGAS2096).